A 260-amino-acid chain; its full sequence is MTYLDKILEHKRKEIEALKPQNFKKQFESQAENLPAPRDFAAALRRKAPSEPLRLIAELKKASPSRGVMVHDFKPLEIAERYRTLGASAYSVLTDEEFFQGHANYLKAVRENFDLPVLRKDFIIDESQIYEARLLGADALLLIVAALSPEALLQFRELAESLGMSALVEVHSKPELDIAVACGATIIGVNNRDLRTFKVNIQTSVELFASYPNDVIAVSESGIKTPEDLQQLADAGFDAVLIGEGLITSERLAAYGWNEK.

Belongs to the TrpC family.

The catalysed reaction is 1-(2-carboxyphenylamino)-1-deoxy-D-ribulose 5-phosphate + H(+) = (1S,2R)-1-C-(indol-3-yl)glycerol 3-phosphate + CO2 + H2O. It participates in amino-acid biosynthesis; L-tryptophan biosynthesis; L-tryptophan from chorismate: step 4/5. In Chloroherpeton thalassium (strain ATCC 35110 / GB-78), this protein is Indole-3-glycerol phosphate synthase.